Consider the following 270-residue polypeptide: Tryptophan synthase alpha chain (270 aa).

Catalysis depends on proton acceptor residues E51 and D62.

This sequence belongs to the TrpA family. In terms of assembly, tetramer of two alpha and two beta chains.

The enzyme catalyses (1S,2R)-1-C-(indol-3-yl)glycerol 3-phosphate + L-serine = D-glyceraldehyde 3-phosphate + L-tryptophan + H2O. The protein operates within amino-acid biosynthesis; L-tryptophan biosynthesis; L-tryptophan from chorismate: step 5/5. The alpha subunit is responsible for the aldol cleavage of indoleglycerol phosphate to indole and glyceraldehyde 3-phosphate. This is Tryptophan synthase alpha chain from Methanothermobacter thermautotrophicus (strain ATCC 29096 / DSM 1053 / JCM 10044 / NBRC 100330 / Delta H) (Methanobacterium thermoautotrophicum).